The primary structure comprises 305 residues: MSGKLRLYKEKLEGYNRFYSIVKTIKMVTLAKYRAAQGRIRTRDFSLRYTELAFSKPQASRDAVAAAKNALVYIPITTNRGSCGALNSNIVRCIDSVVSSKMVLMPVGKRGIDSFSKLYPDEFRYGIINDMKESMHFGYATFVIENAYEVSKDADRYQVIFNRFVSAGVQRNAVYNIPSYEKWKEDLADAASSDNQKNRYLFANALQNEEEQLIRDFFDFHAALAVLNAVGENELSEQAARLVAVEGQLTNISSLQQRTSSLYNKTRQFGITAALIEILSAMSSLEGNAMKGVRRNKFWEGAVTK.

Belongs to the ATPase gamma chain family. As to quaternary structure, F-type ATPases have 2 components, F(1) - the catalytic core - and F(o) - the membrane proton channel. F(1) has five subunits: alpha(3), beta(3), gamma(1), delta(1), epsilon(1), plus the additional subunit P18 (Tb427.05.1710) that is not present in F(1)F(o) ATP synthase from metazoa. Subunit P18 (Tb927.5.1710) interacts with the alpha subunit with a 1:1 stoichiometry; the interaction is direct. Subunit gamma is part of the central stalk. F(o) has three main subunits: a, b and c. The trypanosomal ATPase complex contains additional subunits that are not present in the F(1)F(o) ATP synthase from metazoa.

The protein resides in the mitochondrion. The protein localises to the mitochondrion inner membrane. Its function is as follows. Mitochondrial membrane ATP synthase (F(1)F(o) ATP synthase) produces ATP from ADP in the presence of a proton gradient across the membrane which is generated by electron transport complexes of the respiratory chain. F-type ATPases consist of two structural domains, F(1) - containing the extramembraneous catalytic core, and F(o) - containing the membrane proton channel, linked together by a central stalk and a peripheral stalk. During catalysis, ATP synthesis in the catalytic domain of F(1) is coupled via a rotary mechanism of the central stalk subunits to proton translocation. Subunits alpha and beta form the catalytic core in F(1). Rotation of the central stalk against the surrounding alpha(3)beta(3) subunits leads to hydrolysis of ATP in three separate catalytic sites on the beta subunits. Contrary to the procyclic, insect form that requires F(1)F(o) ATP synthase for ATP synthesis, the bloodstream form relies on ATP hydrolysis by F(1)F(o) ATP synthase to maintain its mitochondrial membrane potential. In Trypanosoma brucei brucei, this protein is ATP synthase subunit gamma, mitochondrial.